The following is a 242-amino-acid chain: MKKPRQQSCLFGVKAFEEAINNQVHIKLVNISIRHKKLIPLIEAKKINFQIHSTNWFNNQYRDINHQELVAVLDTNQLLIPLDQLVKVVENKKCSTLVMLDEIQDPYNFGAILRTCLASEVDGIIFKKNNQVPINNTVMKTSMGSVFYQNLVQVANLSYTITKLKEIGFWTVVSTLDPIWKPIDYRKVDFAKKILIVGNEDRGVNQLITKNADCRIKIPMNNKINSLNVSVALGIILFAWKN.

3 residues coordinate S-adenosyl-L-methionine: glycine 198, isoleucine 218, and leucine 227.

This sequence belongs to the class IV-like SAM-binding methyltransferase superfamily. RNA methyltransferase TrmH family.

This is an uncharacterized protein from Mycoplasma genitalium (strain ATCC 33530 / DSM 19775 / NCTC 10195 / G37) (Mycoplasmoides genitalium).